Consider the following 122-residue polypeptide: Large ribosomal subunit protein uL14 (122 aa).

This sequence belongs to the universal ribosomal protein uL14 family. In terms of assembly, part of the 50S ribosomal subunit. Forms a cluster with proteins L3 and L19. In the 70S ribosome, L14 and L19 interact and together make contacts with the 16S rRNA in bridges B5 and B8.

In terms of biological role, binds to 23S rRNA. Forms part of two intersubunit bridges in the 70S ribosome. This Desulfotalea psychrophila (strain LSv54 / DSM 12343) protein is Large ribosomal subunit protein uL14.